We begin with the raw amino-acid sequence, 638 residues long: DNA gyrase subunit B (638 aa).

A Toprim domain is found at 422 to 536; the sequence is SELYIVEGDS…NGYVYIAQPP (115 aa). The Mg(2+) site is built by Glu-428, Asp-501, and Asp-503.

This sequence belongs to the type II topoisomerase GyrB family. As to quaternary structure, heterotetramer, composed of two GyrA and two GyrB chains. In the heterotetramer, GyrA contains the active site tyrosine that forms a transient covalent intermediate with DNA, while GyrB binds cofactors and catalyzes ATP hydrolysis. Requires Mg(2+) as cofactor. The cofactor is Mn(2+). It depends on Ca(2+) as a cofactor.

The protein localises to the cytoplasm. The enzyme catalyses ATP-dependent breakage, passage and rejoining of double-stranded DNA.. A type II topoisomerase that negatively supercoils closed circular double-stranded (ds) DNA in an ATP-dependent manner to modulate DNA topology and maintain chromosomes in an underwound state. Negative supercoiling favors strand separation, and DNA replication, transcription, recombination and repair, all of which involve strand separation. Also able to catalyze the interconversion of other topological isomers of dsDNA rings, including catenanes and knotted rings. Type II topoisomerases break and join 2 DNA strands simultaneously in an ATP-dependent manner. The polypeptide is DNA gyrase subunit B (Bacillus subtilis (strain 168)).